The primary structure comprises 194 residues: NADPH-flavin oxidoreductase (194 aa).

The protein belongs to the non-flavoprotein flavin reductase family. In terms of assembly, homodimer. It can form an isobutylamine N-hydroxylase two component enzyme system formed of a flavin reductase component (VlmR) and a monooxygenase component (VlmH).

It catalyses the reaction FADH2 + NADP(+) = FAD + NADPH + 2 H(+). The enzyme catalyses FMNH2 + NADP(+) = FMN + NADPH + 2 H(+). In terms of biological role, involved in the biosynthesis of the azoxy antibiotic valanimycin, which has an antitumor activity. Catalyzes the reduction of FAD/FMN to FADH(2)/FMNH(2) which are subsequently used for the hydroxylation of isobutylamine by the isobutylamine N-hydroxylase VlmH. It can reduce either FAD or flavin mononucleotide (FMN) but prefers FAD. The enzyme has a strong preference for NADPH as acceptor. In Streptomyces viridifaciens, this protein is NADPH-flavin oxidoreductase.